The sequence spans 208 residues: Ypt/Rab-type GTPase YPT7 (208 aa).

Residues 17–23 (SGVGKTS), 33–40 (YSQQYKAT), Gly-67, and 126–129 (NKID) each bind GTP. Positions 37–45 (YKATIGADF) match the Effector region motif. Lys-147 is covalently cross-linked (Glycyl lysine isopeptide (Lys-Gly) (interchain with G-Cter in ubiquitin)). GTP is bound at residue 158–160 (SAK). 2 S-geranylgeranyl cysteine lipidation sites follow: Cys-206 and Cys-208. Cys-208 bears the Cysteine methyl ester mark.

The protein belongs to the small GTPase superfamily. Rab family. Interacts with IVY1. Interacts with YIF1, YIP4 and YIP5. Interacts with the HOPS complex. Interacts with the class C-Vps complex. Interacts with VPS35. Interacts with VPS39. Interacts with the GDP dissociation inhibitor GDI1. Interacts with CCZ1.

It localises to the late endosome. It is found in the vacuole membrane. With respect to regulation, rab activation is generally mediated by a guanine exchange factor (GEF), while inactivation through hydrolysis of bound GTP is catalyzed by a GTPase activating protein (GAP). YPT7 is activated by GEFs MON1-CCZ1 complex (MC1) and VAM6/VPS39, and inactivated by GAPs GYP7 and GYP1. In terms of biological role, ypt/Rab-type GTPases are key regulators of membrane trafficking and intracellular vesicular transport. They act as molecular switches that convert between GTP-bound and GDP-bound states, and regulate virtually all steps of membrane traffic from the formation of the transport vesicle at the donor membrane to its fusion at the target membrane. In the GDP-bound state, Ypt proteins are predominantly cytosolic, solubilized through the interaction with a GDP dissociation inhibitor (GDI). In the GTP-bound state, the proteins are membrane bound and interact with specific effector proteins that select cargo, promote vesicle movement, or verify the correct site of fusion. Involved in regulation of vesicular protein transport in exo- and endocytosis. Involved in regulation of late endosome to vacuole trafficking and homotypic vacuole fusion, by interacting in its GTP-bound state on the donor membrane with the large multiprotein HOPS/class C-Vps tethering complex on the acceptor membrane. Involved in retromer assembly and cargo export, recognizing the cargo selection complex (CSC). GTP-bound YPT7 recruits CSC to vacuolar membranes via retromer subunit VPS35. Interacts with the HOPS complex subunit VPS39 independent of the HOPS complex at mitochondria-vacuole contact sites (vCLAMPs), providing a physical and metabolic interconnection between the endocytic pathway and mitochondria. This chain is Ypt/Rab-type GTPase YPT7 (YPT7), found in Saccharomyces cerevisiae (strain ATCC 204508 / S288c) (Baker's yeast).